The following is a 253-amino-acid chain: Uracil-DNA glycosylase (253 aa).

The Proton acceptor role is filled by Asp79.

This sequence belongs to the uracil-DNA glycosylase (UDG) superfamily. UNG family.

It is found in the cytoplasm. It carries out the reaction Hydrolyzes single-stranded DNA or mismatched double-stranded DNA and polynucleotides, releasing free uracil.. Functionally, excises uracil residues from the DNA which can arise as a result of misincorporation of dUMP residues by DNA polymerase or due to deamination of cytosine. The chain is Uracil-DNA glycosylase from Xylella fastidiosa (strain M12).